A 223-amino-acid chain; its full sequence is Putative archaetidylserine decarboxylase proenzyme (223 aa).

Serine 183 serves as the catalytic Schiff-base intermediate with substrate; via pyruvic acid. At serine 183 the chain carries Pyruvic acid (Ser); by autocatalysis.

Belongs to the phosphatidylserine decarboxylase family. PSD-A subfamily. In terms of assembly, heterodimer of a large membrane-associated beta subunit and a small pyruvoyl-containing alpha subunit. Pyruvate serves as cofactor. In terms of processing, is synthesized initially as an inactive proenzyme. Formation of the active enzyme involves a self-maturation process in which the active site pyruvoyl group is generated from an internal serine residue via an autocatalytic post-translational modification. Two non-identical subunits are generated from the proenzyme in this reaction, and the pyruvate is formed at the N-terminus of the alpha chain, which is derived from the carboxyl end of the proenzyme. The post-translation cleavage follows an unusual pathway, termed non-hydrolytic serinolysis, in which the side chain hydroxyl group of the serine supplies its oxygen atom to form the C-terminus of the beta chain, while the remainder of the serine residue undergoes an oxidative deamination to produce ammonia and the pyruvoyl prosthetic group on the alpha chain.

The protein resides in the cell membrane. The enzyme catalyses archaetidylserine + H(+) = archaetidylethanolamine + CO2. Its function is as follows. Catalyzes the formation of archaetidylethanolamine (PtdEtn) from archaetidylserine (PtdSer). This Methanothermobacter thermautotrophicus (strain ATCC 29096 / DSM 1053 / JCM 10044 / NBRC 100330 / Delta H) (Methanobacterium thermoautotrophicum) protein is Putative archaetidylserine decarboxylase proenzyme.